The sequence spans 347 residues: NADH-quinone oxidoreductase subunit H (347 aa).

9 helical membrane passes run 13–33, 50–70, 82–102, 115–135, 161–181, 198–218, 263–283, 286–306, and 321–341; these read IIMI…IAYV, PNVV…KFVF, AVFL…WAVV, VGIL…IMGG, IGFV…TDIV, FLDW…ISAL, CALT…IWIL, VPGI…FAMV, and LGWK…AFVL.

The protein belongs to the complex I subunit 1 family. In terms of assembly, NDH-1 is composed of 14 different subunits. Subunits NuoA, H, J, K, L, M, N constitute the membrane sector of the complex.

It localises to the cell inner membrane. The enzyme catalyses a quinone + NADH + 5 H(+)(in) = a quinol + NAD(+) + 4 H(+)(out). NDH-1 shuttles electrons from NADH, via FMN and iron-sulfur (Fe-S) centers, to quinones in the respiratory chain. The immediate electron acceptor for the enzyme in this species is believed to be ubiquinone. Couples the redox reaction to proton translocation (for every two electrons transferred, four hydrogen ions are translocated across the cytoplasmic membrane), and thus conserves the redox energy in a proton gradient. This subunit may bind ubiquinone. In Rhizobium johnstonii (strain DSM 114642 / LMG 32736 / 3841) (Rhizobium leguminosarum bv. viciae), this protein is NADH-quinone oxidoreductase subunit H.